The following is a 968-amino-acid chain: RNA polymerase-associated protein RapA (968 aa).

The 171-residue stretch at 164-334 (DVGRRHAPRV…FARLRLLDPN (171 aa)) folds into the Helicase ATP-binding domain. Position 177–184 (177–184 (DEVGLGKT)) interacts with ATP. The DEAH box signature appears at 280–283 (DEAH). Positions 490–685 (RVEWLMGYLT…ALKAQLEQGR (196 aa)) constitute a Helicase C-terminal domain.

The protein belongs to the SNF2/RAD54 helicase family. RapA subfamily. Interacts with the RNAP. Has a higher affinity for the core RNAP than for the holoenzyme. Its ATPase activity is stimulated by binding to RNAP.

Transcription regulator that activates transcription by stimulating RNA polymerase (RNAP) recycling in case of stress conditions such as supercoiled DNA or high salt concentrations. Probably acts by releasing the RNAP, when it is trapped or immobilized on tightly supercoiled DNA. Does not activate transcription on linear DNA. Probably not involved in DNA repair. In Salmonella choleraesuis (strain SC-B67), this protein is RNA polymerase-associated protein RapA.